A 177-amino-acid chain; its full sequence is tRNA-splicing endonuclease (177 aa).

Active-site residues include Tyr114, His123, and Lys154.

Belongs to the tRNA-intron endonuclease family. Archaeal short subfamily. As to quaternary structure, homotetramer; although the tetramer contains four active sites, only two participate in the cleavage. Therefore, it should be considered as a dimer of dimers.

The enzyme catalyses pretRNA = a 3'-half-tRNA molecule with a 5'-OH end + a 5'-half-tRNA molecule with a 2',3'-cyclic phosphate end + an intron with a 2',3'-cyclic phosphate and a 5'-hydroxyl terminus.. In terms of biological role, endonuclease that removes tRNA introns. Cleaves pre-tRNA at the 5'- and 3'-splice sites to release the intron. The products are an intron and two tRNA half-molecules bearing 2',3' cyclic phosphate and 5'-OH termini. Recognizes a pseudosymmetric substrate in which 2 bulged loops of 3 bases are separated by a stem of 4 bp. The chain is tRNA-splicing endonuclease from Methanococcus maripaludis (strain DSM 14266 / JCM 13030 / NBRC 101832 / S2 / LL).